Here is a 321-residue protein sequence, read N- to C-terminus: Beta-ketoacyl-[acyl-carrier-protein] synthase III (321 aa).

Catalysis depends on residues cysteine 114 and histidine 248. The interval 249–253 (QANKR) is ACP-binding. Residue asparagine 278 is part of the active site.

This sequence belongs to the thiolase-like superfamily. FabH family. Homodimer.

It is found in the cytoplasm. It catalyses the reaction malonyl-[ACP] + acetyl-CoA + H(+) = 3-oxobutanoyl-[ACP] + CO2 + CoA. The protein operates within lipid metabolism; fatty acid biosynthesis. Its function is as follows. Catalyzes the condensation reaction of fatty acid synthesis by the addition to an acyl acceptor of two carbons from malonyl-ACP. Catalyzes the first condensation reaction which initiates fatty acid synthesis and may therefore play a role in governing the total rate of fatty acid production. Possesses both acetoacetyl-ACP synthase and acetyl transacylase activities. Its substrate specificity determines the biosynthesis of branched-chain and/or straight-chain of fatty acids. The sequence is that of Beta-ketoacyl-[acyl-carrier-protein] synthase III from Sphingopyxis alaskensis (strain DSM 13593 / LMG 18877 / RB2256) (Sphingomonas alaskensis).